Here is a 339-residue protein sequence, read N- to C-terminus: DNA-directed RNA polymerase subunit alpha (339 aa).

The interval 1–238 is alpha N-terminal domain (alpha-NTD); the sequence is MVDPIVTKNW…EQLSIFINFD (238 aa). Positions 255–339 are alpha C-terminal domain (alpha-CTD); that stretch reads LNENLFRSVD…KAAPQGAPKV (85 aa).

Belongs to the RNA polymerase alpha chain family. In terms of assembly, homodimer. The RNAP catalytic core consists of 2 alpha, 1 beta, 1 beta' and 1 omega subunit. When a sigma factor is associated with the core the holoenzyme is formed, which can initiate transcription.

The catalysed reaction is RNA(n) + a ribonucleoside 5'-triphosphate = RNA(n+1) + diphosphate. In terms of biological role, DNA-dependent RNA polymerase catalyzes the transcription of DNA into RNA using the four ribonucleoside triphosphates as substrates. The polypeptide is DNA-directed RNA polymerase subunit alpha (Anaeromyxobacter sp. (strain Fw109-5)).